Reading from the N-terminus, the 361-residue chain is Phosphoserine aminotransferase (361 aa).

Arginine 43 is a binding site for L-glutamate. Pyridoxal 5'-phosphate contacts are provided by residues 77-78 (AS), tryptophan 103, threonine 153, aspartate 173, and glutamine 196. At lysine 197 the chain carries N6-(pyridoxal phosphate)lysine. Pyridoxal 5'-phosphate is bound at residue 238-239 (NT).

It belongs to the class-V pyridoxal-phosphate-dependent aminotransferase family. SerC subfamily. Homodimer. Requires pyridoxal 5'-phosphate as cofactor.

It localises to the cytoplasm. It carries out the reaction O-phospho-L-serine + 2-oxoglutarate = 3-phosphooxypyruvate + L-glutamate. The enzyme catalyses 4-(phosphooxy)-L-threonine + 2-oxoglutarate = (R)-3-hydroxy-2-oxo-4-phosphooxybutanoate + L-glutamate. Its pathway is amino-acid biosynthesis; L-serine biosynthesis; L-serine from 3-phospho-D-glycerate: step 2/3. Functionally, catalyzes the reversible conversion of 3-phosphohydroxypyruvate to phosphoserine and of 3-hydroxy-2-oxo-4-phosphonooxybutanoate to phosphohydroxythreonine. The chain is Phosphoserine aminotransferase from Bacillus anthracis (strain A0248).